The sequence spans 469 residues: Phenylalanine--tRNA ligase alpha subunit (469 aa).

Residues Thr-309, 348–350 (QLD), and Phe-388 each bind L-phenylalanine. Glu-390 is a binding site for Mg(2+).

This sequence belongs to the class-II aminoacyl-tRNA synthetase family. Phe-tRNA synthetase alpha subunit type 2 subfamily. Tetramer of two alpha and two beta subunits. Requires Mg(2+) as cofactor.

It localises to the cytoplasm. It carries out the reaction tRNA(Phe) + L-phenylalanine + ATP = L-phenylalanyl-tRNA(Phe) + AMP + diphosphate + H(+). This is Phenylalanine--tRNA ligase alpha subunit from Sulfurisphaera tokodaii (strain DSM 16993 / JCM 10545 / NBRC 100140 / 7) (Sulfolobus tokodaii).